The primary structure comprises 118 residues: ATP synthase subunit gamma, chloroplastic (118 aa).

A disulfide bridge links cysteine 30 with cysteine 36.

It belongs to the ATPase gamma chain family. In terms of assembly, F-type ATPases have 2 components, CF(1) - the catalytic core - and CF(0) - the membrane proton channel. CF(1) has five subunits: alpha(3), beta(3), gamma(1), delta(1), epsilon(1). CF(0) has four main subunits: a, b, b' and c.

The protein resides in the plastid. It is found in the chloroplast thylakoid membrane. Produces ATP from ADP in the presence of a proton gradient across the membrane. The gamma chain is believed to be important in regulating ATPase activity and the flow of protons through the CF(0) complex. In terms of biological role, inceptin is a proteolytic fragment produced by insect larvae that previously ingested the protein. This peptide mediate plant perception of herbivory through the induction of volatile, phenylpropanoid and protease inhibitor defenses such as ethylene, jasmonic acid and salicylic acid for example. This Vigna unguiculata (Cowpea) protein is ATP synthase subunit gamma, chloroplastic.